Consider the following 482-residue polypeptide: Glycogen synthase (482 aa).

Lysine 15 serves as a coordination point for ADP-alpha-D-glucose.

This sequence belongs to the glycosyltransferase 1 family. Bacterial/plant glycogen synthase subfamily.

The enzyme catalyses [(1-&gt;4)-alpha-D-glucosyl](n) + ADP-alpha-D-glucose = [(1-&gt;4)-alpha-D-glucosyl](n+1) + ADP + H(+). It functions in the pathway glycan biosynthesis; glycogen biosynthesis. Synthesizes alpha-1,4-glucan chains using ADP-glucose. This is Glycogen synthase from Elusimicrobium minutum (strain Pei191).